We begin with the raw amino-acid sequence, 352 residues long: Enhancer of mRNA-decapping protein 1 (352 aa).

Disordered regions lie at residues Met-1–His-258 and Gln-277–Ser-352. Low complexity predominate over residues His-71–Lys-80. Polar residues-rich tracts occupy residues Asn-93–Gly-104 and Thr-205–Val-225. Over residues Gly-289 to Gln-309 the composition is skewed to low complexity.

It belongs to the EDC family.

The protein localises to the cytoplasm. Its function is as follows. mRNA-binding protein which stimulates mRNA decapping. The sequence is that of Enhancer of mRNA-decapping protein 1 (EDC1) from Debaryomyces hansenii (strain ATCC 36239 / CBS 767 / BCRC 21394 / JCM 1990 / NBRC 0083 / IGC 2968) (Yeast).